The following is a 331-amino-acid chain: MILAVDAMGGDHAPRAIVEGVVQFLAERPTEQIEIRLVGDELKLRSYDIKDPRVKIVHAASVITGEDEPVRAIRRKKDSSLVVAANLVKSNEADALISAGNTGALMTAGLFVIGRIEGIDRPALAPTFPTRNGKGVVILDVGANPDAKAEHLLDYAIMGSVYAEQVRGIKQPKVALLNIGSEAGKGNALTKETYPLLETAPIHFVGNVEAREAMSGEVDVIVTEGFAGNTLLKSTEGAASMIMGVMKEQFMSSFSSKIAALILKPKLKKMKQLLAYEEYGGAGLFGIAAPVIKAHGSSNAYAFSRALVQAEQMVEQQVVTKIIEAKKTKEI.

This sequence belongs to the PlsX family. Homodimer. Probably interacts with PlsY.

It is found in the cytoplasm. It carries out the reaction a fatty acyl-[ACP] + phosphate = an acyl phosphate + holo-[ACP]. It participates in lipid metabolism; phospholipid metabolism. Functionally, catalyzes the reversible formation of acyl-phosphate (acyl-PO(4)) from acyl-[acyl-carrier-protein] (acyl-ACP). This enzyme utilizes acyl-ACP as fatty acyl donor, but not acyl-CoA. The protein is Phosphate acyltransferase of Exiguobacterium sibiricum (strain DSM 17290 / CCUG 55495 / CIP 109462 / JCM 13490 / 255-15).